A 319-amino-acid polypeptide reads, in one-letter code: MPVTLSFGNRHNYEINHSRLARLMSPDKEEALYMGVWDRFKDCFRTHKKQEVLEVLYTLIHGCERENQAELNVDITGMEKIHAFTQLKEYANPSQQDRFVMRFDMNQTQVLFEIDGKVIDKCNLHRLLNVSENCIFKVMEEDEEELFLKICIKYGEKISRYPELLEGFANKLKDAVNEDDDVKDEVYKLMRSGEDRKMECVEWNGTLTEEEKNKLRCLQMGSFNITTQFFKIGYWELEGEVLFDMVHPTLSYLLQAYKPSLSSDLIETNTMLFSDVLNKDYDDYQNNKREIDAILRRIYRSHNNTLFISEKSSCRNMLI.

The Required to target late endocytic compartments motif lies at 37–44; the sequence is WDRFKDCF.

It belongs to the SopD family.

It is found in the secreted. It localises to the host cell membrane. In terms of biological role, effector proteins function to alter host cell physiology and promote bacterial survival in host tissues. Contributes to the formation of Salmonella-induced filaments (Sifs) in infected epithelial cells and to replication in macrophages. The polypeptide is Secreted effector protein sopD2 (sopD2) (Salmonella typhimurium (strain LT2 / SGSC1412 / ATCC 700720)).